Reading from the N-terminus, the 328-residue chain is Putative potassium channel protein YugO (328 aa).

The next 3 membrane-spanning stretches (helical) occupy residues 19 to 39 (IGVI…ILEP), 42 to 62 (FTSV…VGYG), and 73 to 93 (AAGI…FATL). The 125-residue stretch at 114-238 (RDHIILIGWN…ERAGANQIIG (125 aa)) folds into the RCK N-terminal domain.

Its subcellular location is the cell membrane. This is Putative potassium channel protein YugO (yugO) from Bacillus subtilis (strain 168).